The sequence spans 257 residues: UPF0246 protein Rpic_2164 (257 aa).

The protein belongs to the UPF0246 family.

In Ralstonia pickettii (strain 12J), this protein is UPF0246 protein Rpic_2164.